The following is a 358-amino-acid chain: Cyanide hydratase (358 aa).

A CN hydrolase domain is found at 8–287 (YKAAAVNAEP…QGLLFVDIDL (280 aa)). The active-site Proton acceptor is the Glu-48. Lys-130 is a catalytic residue. Catalysis depends on Cys-165, which acts as the Nucleophile.

Belongs to the carbon-nitrogen hydrolase superfamily. Nitrilase family. As to quaternary structure, oligomer of dimers, forming left-handed helical fibers.

The catalysed reaction is formamide = hydrogen cyanide + H2O. Catalyzes the hydration of cyanide to formamide. Degradation of cyanide may be important for plant pathogenic fungi in infection of cyanogenic plants. The polypeptide is Cyanide hydratase (Penicillium rubens (strain ATCC 28089 / DSM 1075 / NRRL 1951 / Wisconsin 54-1255) (Penicillium chrysogenum)).